A 165-amino-acid chain; its full sequence is Small ribosomal subunit protein uS5 (165 aa).

The region spanning Leu-13–Ile-76 is the S5 DRBM domain.

It belongs to the universal ribosomal protein uS5 family. As to quaternary structure, part of the 30S ribosomal subunit. Contacts proteins S4 and S8.

Its function is as follows. With S4 and S12 plays an important role in translational accuracy. In terms of biological role, located at the back of the 30S subunit body where it stabilizes the conformation of the head with respect to the body. This Chlamydia muridarum (strain MoPn / Nigg) protein is Small ribosomal subunit protein uS5.